Here is a 248-residue protein sequence, read N- to C-terminus: ATP synthase subunit a, chloroplastic (248 aa).

Helical transmembrane passes span 96–116 (VPFI…GALL), 135–155 (INTT…AGLY), 200–220 (LVVA…MMLL), and 221–241 (GLFT…AYIG).

The protein belongs to the ATPase A chain family. In terms of assembly, F-type ATPases have 2 components, CF(1) - the catalytic core - and CF(0) - the membrane proton channel. CF(1) has five subunits: alpha(3), beta(3), gamma(1), delta(1), epsilon(1). CF(0) has four main subunits: a, b, b' and c.

Its subcellular location is the plastid. It localises to the chloroplast thylakoid membrane. Its function is as follows. Key component of the proton channel; it plays a direct role in the translocation of protons across the membrane. The chain is ATP synthase subunit a, chloroplastic from Adiantum capillus-veneris (Maidenhair fern).